Reading from the N-terminus, the 514-residue chain is Calcium-binding mitochondrial carrier protein SCaMC-2 (514 aa).

Residues 1 to 234 (MARPRSLVSP…EKQTGMWWRH (234 aa)) are Mitochondrial intermembrane-facing. EF-hand domains lie at 56-91 (EHER…LGVH), 92-122 (RTEL…HYLR), 123-158 (DHEK…LGVN), and 159-194 (ISEQ…HSAE). Asp69, Asn71, Asp73, Asp80, Asp105, Asp107, Asp109, Gln111, and Glu116 together coordinate Ca(2+). Solcar repeat units follow at residues 229-315 (GMWW…IKRI), 323-408 (LGIH…LKNA), and 420-508 (PGVF…LKLT). A helical membrane pass occupies residues 235–252 (LVAGGGAGAVSRTCTAPL). The Mitochondrial matrix portion of the chain corresponds to 253–289 (DRLKVLMQVHASRSNNMSILGGFTHMIREGGFRSLWR). A helical membrane pass occupies residues 290-309 (GNGINVIKIAPESAIKFMAY). Residues 310–332 (EQIKRIIGSNQETLGIHERFVAG) lie on the Mitochondrial intermembrane side of the membrane. Residues 333–346 (SLAGVIAQSSIYPM) traverse the membrane as a helical segment. Topologically, residues 347–382 (EVLKTRMALRKTGQYQGVLDCGKKILLQEGLSAFYK) are mitochondrial matrix. The helical transmembrane segment at 383-402 (GYVPNMLGIIPYAGIDLAVY) threads the bilayer. Residues 403–425 (ETLKNAWLQRYATSSADPGVFVL) lie on the Mitochondrial intermembrane side of the membrane. A helical membrane pass occupies residues 426 to 443 (LACGTVSSTCGQLASYPL). At 444-482 (ALVRTRMQAEASVEGAPQMTMSKLFKHIVKTEGAFGLYR) the chain is on the mitochondrial matrix side. A helical membrane pass occupies residues 483-502 (GLAPNFMKVIPAVSISYVVY). Residues 503 to 514 (ENLKLTLGVQSR) are Mitochondrial intermembrane-facing.

Belongs to the mitochondrial carrier (TC 2.A.29) family.

It is found in the mitochondrion inner membrane. Its function is as follows. Calcium-dependent mitochondrial solute carrier. The chain is Calcium-binding mitochondrial carrier protein SCaMC-2 (slc25a25) from Xenopus laevis (African clawed frog).